Consider the following 691-residue polypeptide: Elongation factor G (691 aa).

In terms of domain architecture, tr-type G spans 12–286 (KKLRNIGIMA…GVLEYLPSPL (275 aa)). Residues 21–28 (AHIDAGKT), 85–89 (DTPGH), and 139–142 (NKMD) contribute to the GTP site.

Belongs to the TRAFAC class translation factor GTPase superfamily. Classic translation factor GTPase family. EF-G/EF-2 subfamily.

It is found in the cytoplasm. Functionally, catalyzes the GTP-dependent ribosomal translocation step during translation elongation. During this step, the ribosome changes from the pre-translocational (PRE) to the post-translocational (POST) state as the newly formed A-site-bound peptidyl-tRNA and P-site-bound deacylated tRNA move to the P and E sites, respectively. Catalyzes the coordinated movement of the two tRNA molecules, the mRNA and conformational changes in the ribosome. In Thermosipho melanesiensis (strain DSM 12029 / CIP 104789 / BI429), this protein is Elongation factor G.